Here is a 37-residue protein sequence, read N- to C-terminus: Cellular retinoic acid-binding protein 2 (37 aa).

The Nuclear localization signal motif lies at Lys21–Lys31.

It belongs to the calycin superfamily. Fatty-acid binding protein (FABP) family. Embryo.

It is found in the cytoplasm. The protein resides in the endoplasmic reticulum. The protein localises to the nucleus. In terms of biological role, transports retinoic acid to the nucleus. Regulates the access of retinoic acid to the nuclear retinoic acid receptors. The sequence is that of Cellular retinoic acid-binding protein 2 (CRABP2) from Gallus gallus (Chicken).